We begin with the raw amino-acid sequence, 257 residues long: DNA-binding and peroxide stress resistance protein YaaA (257 aa).

A Helix-hairpin-helix motif is present at residues 35–66 (IGIARKLSAPQIGKLMSISDKLADLNATRFHD).

The protein belongs to the UPF0246 family.

It is found in the cytoplasm. Protects bacteria from neutrophil-related defense upon infection of mammals. Binds DNA. The chain is DNA-binding and peroxide stress resistance protein YaaA from Klebsiella pneumoniae subsp. pneumoniae (strain HS11286).